Here is a 1369-residue protein sequence, read N- to C-terminus: Xanthine dehydrogenase (1369 aa).

The region spanning 20 to 106 (GEAVVYVNGV…GMHIITVEGI (87 aa)) is the 2Fe-2S ferredoxin-type domain. Cys-58, Cys-63, Cys-66, Cys-88, Cys-128, Cys-131, Cys-164, and Cys-166 together coordinate [2Fe-2S] cluster. Residues 265-450 (NGFNGIRWYR…LSVILPWTRP (186 aa)) enclose the FAD-binding PCMH-type domain. FAD is bound by residues 293–300 (LIIGNSEV), Phe-373, 383–387 (SVGGN), Asp-396, Leu-440, and Lys-458. Residues Gln-804 and Phe-835 each contribute to the Mo-molybdopterin site. Residues Glu-839 and Arg-917 each contribute to the substrate site. Arg-949 is a binding site for Mo-molybdopterin. Phe-951 and Thr-1047 together coordinate substrate. Ala-1116 serves as a coordination point for Mo-molybdopterin. Glu-1305 acts as the Proton acceptor in catalysis.

It belongs to the xanthine dehydrogenase family. As to quaternary structure, homodimer. [2Fe-2S] cluster serves as cofactor. Requires FAD as cofactor. The cofactor is Mo-molybdopterin.

The enzyme catalyses xanthine + NAD(+) + H2O = urate + NADH + H(+). The catalysed reaction is hypoxanthine + NAD(+) + H2O = xanthine + NADH + H(+). Key enzyme involved in purine catabolism. Catalyzes the oxidation of hypoxanthine to xanthine and the oxidation of xanthine to urate. The sequence is that of Xanthine dehydrogenase (XDH) from Oryza sativa subsp. japonica (Rice).